The sequence spans 161 residues: Pathogenesis-related protein 1 (161 aa).

Residues 1–26 form the signal peptide; the sequence is MNFTGYSRFLIVFVALVGALVLPSKA. The SCP domain maps to 34–149; it reads LRVHNQARGA…NGGTIISCNY (116 aa). Cystine bridges form between C70/C138, C113/C117, and C133/C147.

Belongs to the CRISP family.

It is found in the secreted. It localises to the extracellular space. Its subcellular location is the apoplast. In terms of biological role, partially responsible for acquired pathogen resistance. The sequence is that of Pathogenesis-related protein 1 from Arabidopsis thaliana (Mouse-ear cress).